Here is a 1534-residue protein sequence, read N- to C-terminus: DNA-directed RNA polymerase subunit beta'' (1534 aa).

Positions 220, 296, 303, and 306 each coordinate Zn(2+). Basic and acidic residues-rich tracts occupy residues 644–668 (RTQEEEYRTREEEYRTREEEYRTRE) and 678–688 (PENKYRTREGE). Disordered regions lie at residues 644-698 (RTQE…EDEY) and 719-800 (YRTL…KKEG). Composition is skewed to acidic residues over residues 744-762 (GEYEILEEDSEEEYGSSED) and 770-789 (TLEEDSEEDSEEDSEDEYGS).

It belongs to the RNA polymerase beta' chain family. RpoC2 subfamily. As to quaternary structure, in plastids the minimal PEP RNA polymerase catalytic core is composed of four subunits: alpha, beta, beta', and beta''. When a (nuclear-encoded) sigma factor is associated with the core the holoenzyme is formed, which can initiate transcription. Zn(2+) is required as a cofactor.

Its subcellular location is the plastid. It is found in the chloroplast. The enzyme catalyses RNA(n) + a ribonucleoside 5'-triphosphate = RNA(n+1) + diphosphate. DNA-dependent RNA polymerase catalyzes the transcription of DNA into RNA using the four ribonucleoside triphosphates as substrates. This chain is DNA-directed RNA polymerase subunit beta'', found in Saccharum officinarum (Sugarcane).